The sequence spans 397 residues: MHILRFSDLCAQGQARGQRVFIRADLNVPQDDAGRITEDTRIRASVPCIQMALEAGAAVMVTSHLGRPTEGEFKPEDSLAPVAQRLSELLGREVPLVADWVDGVQVQPGQVVLLENCRVNKGEKKNDPELAKKMAQLCDIYVNDAFGTAHRAEGTTYGIAEYAKVACAGPLLAAEIDAIQTALAHPKRPLVAIVAGSKVSTKLTILQSLSKNVDGLVVGGGIANTFMLAAGLPIGKSLAEPDLVNEAKAVIAAMAARGAEVPIPTDVVVAKAFAADAPATVKKASEVAEDDLILDIGPETAAQLAAQLKAAGTIVWNGPVGVFEFDQFAGGTKAIAQAIAESSAFSIAGGGDTLAAIAKYGIEKDVGYISTGGGAFLEVLEGKTLPAIEILQKRAAG.

Substrate-binding positions include 25–27 (DLN), Arg-41, 64–67 (HLGR), Arg-118, and Arg-151. ATP contacts are provided by residues Lys-202, Glu-324, and 350 to 353 (GGDT).

The protein belongs to the phosphoglycerate kinase family. Monomer.

Its subcellular location is the cytoplasm. It carries out the reaction (2R)-3-phosphoglycerate + ATP = (2R)-3-phospho-glyceroyl phosphate + ADP. It functions in the pathway carbohydrate degradation; glycolysis; pyruvate from D-glyceraldehyde 3-phosphate: step 2/5. The protein is Phosphoglycerate kinase of Acidovorax sp. (strain JS42).